The following is a 1742-amino-acid chain: Complement C4 (1742 aa).

An N-terminal signal peptide occupies residues 1–19 (MRLLWGLLWAFGLFASSLQ). The N-linked (GlcNAc...) asparagine glycan is linked to Asn-60. Cys-68 and Cys-97 form a disulfide bridge. Residue Asn-226 is glycosylated (N-linked (GlcNAc...) asparagine). A disulfide bridge links Cys-634 with Cys-668. A propeptide spanning residues 675 to 678 (RKKR) is cleaved from the precursor. 3 disulfide bridges follow: Cys-701–Cys-727, Cys-702–Cys-734, and Cys-715–Cys-735. The 35-residue stretch at 701–735 (CCQDGLTRLPMVRSCEQRAARVLQPACREPFLSCC) folds into the Anaphylatoxin-like domain. Residue Asn-861 is glycosylated (N-linked (GlcNAc...) asparagine). The segment at residues 1007-1010 (CGEQ) is a cross-link (isoglutamyl cysteine thioester (Cys-Gln)). Asn-1325 and Asn-1388 each carry an N-linked (GlcNAc...) asparagine glycan. Sulfotyrosine occurs at positions 1414, 1418, and 1420. The propeptide occupies 1445-1451 (RRNRRRR). 5 disulfide bridges follow: Cys-1469–Cys-1533, Cys-1581–Cys-1586, Cys-1593–Cys-1671, Cys-1616–Cys-1740, and Cys-1716–Cys-1725. In terms of domain architecture, NTR spans 1593-1740 (CPRQRRALER…FIQEYSTLGC (148 aa)).

In terms of assembly, in absence of complement activation, circulates in blood as a disulfide-linked trimer of an alpha, beta and gamma chain. As to quaternary structure, complement C4b is composed of complement C4b-A, complement C4 beta and complement C4 gamma chains that are associated via disulfide bonds. Non-enzymatic component of the C3 convertase, also named C4bC2b, composed of the serine protease complement C2b (C2), as well as complement C4b. Non-enzymatic component of the C5 convertase, also named C4bC2bC3b, composed of the serine protease complement C2b (C2), complement C3b, as well as complement C4b. Post-translationally, prior to secretion, the single-chain precursor is enzymatically cleaved by plasminogen (PLG) to yield non-identical chains alpha, beta and gamma. During activation of the complement systems, the alpha chain is cleaved into C4a and C4b by different proteases depending on the complement pathway: C4b stays linked to the beta and gamma chains, while C4a is released in the plasma. The alpha chain is cleaved by C1S to generate C4a and C4b following activation by the classical complement system. The alpha chain is cleaved to generate C4a and C4b by MASP2 following activation by the lectin complement system. The alpha chain is cleaved by GZMK to generate C4a and C4b following activation by the GZMK complement system. Further degradation of C4b by C1 into the inactive fragments C4c and C4d blocks the generation of C3 convertase. The proteolytic cleavages often are incomplete so that many structural forms can be found in plasma. In terms of processing, upon activation, the internal thioester bond reacts with carbohydrate antigens on the target surface to form amide or ester bonds, leading to covalent association with the surface of pathogens. Complement C4b interacts with complement C3b via a thioester linkage. Post-translationally, N- and O-glycosylated. O-glycosylated with a core 1 or possibly core 8 glycan.

The protein localises to the secreted. It is found in the cell surface. Precursor of non-enzymatic components of the classical, lectin and GZMK complement pathways, which consist in a cascade of proteins that leads to phagocytosis and breakdown of pathogens and signaling that strengthens the adaptive immune system. Functionally, non-enzymatic component of C3 and C5 convertases. Generated following cleavage by complement proteases (C1S, MASP2 or GZMK, depending on the complement pathway), it covalently attaches to the surface of pathogens, where it acts as an opsonin that marks the surface of antigens for removal. It then recruits the serine protease complement C2b to form the C3 and C5 convertases, which cleave and activate C3 and C5, respectively, the next components of the complement pathways. Complement C4b-A isotype is responsible for effective binding to form amide bonds with immune aggregates or protein antigens, while complement C4b-B isotype catalyzes the transacylation of the thioester carbonyl group to form ester bonds with carbohydrate antigens. In terms of biological role, putative humoral mediator released following cleavage by complement proteases (C1S, MASP2 or GZMK, depending on the complement pathway). While it is strongly similar to anaphylatoxins, its role is unclear. Was reported to act as a mediator of local inflammatory process; however these effects were probably due to contamination with C3a and/C5a anaphylatoxins in biological assays. The protein is Complement C4 of Cavia porcellus (Guinea pig).